Reading from the N-terminus, the 85-residue chain is RNA-binding protein Hfq (85 aa).

Positions 9 to 68 (DPFLNALRRERIPVSIYLVNGIKLQGQVESFDQFVILLKNTVSQMVYKHAISTVVPARPV) constitute a Sm domain.

It belongs to the Hfq family. In terms of assembly, homohexamer.

Its function is as follows. RNA chaperone that binds small regulatory RNA (sRNAs) and mRNAs to facilitate mRNA translational regulation in response to envelope stress, environmental stress and changes in metabolite concentrations. Also binds with high specificity to tRNAs. This chain is RNA-binding protein Hfq, found in Tolumonas auensis (strain DSM 9187 / NBRC 110442 / TA 4).